The following is a 638-amino-acid chain: ATP-dependent rRNA helicase spb4 (638 aa).

The Q motif signature appears at 14–42; it reads WDGVSPSLSEWVLEAVSSMGFTRMTPVQA. A Helicase ATP-binding domain is found at 45 to 249; that stretch reads IPLFMAHKDV…RVGLRNPVKV (205 aa). 58 to 65 lines the ATP pocket; sequence AVTGSGKT. Residues 197 to 200 carry the DEAD box motif; it reads DEAD. One can recognise a Helicase C-terminal domain in the interval 283 to 437; sequence ALKHILHSVD…PISFSESEAT (155 aa). Composition is skewed to basic and acidic residues over residues 534–554 and 577–615; these read LLQE…RKAT and QRRQ…EERR. The tract at residues 534-638 is disordered; sequence LLQESKEGDG…KDEEEFEGFD (105 aa). Residues 566–619 adopt a coiled-coil conformation; sequence RNKKQKRREQKQRRQEKNKWEKMTEEERQKIRETEQMVESIRVKNEEERRLRRA.

This sequence belongs to the DEAD box helicase family. DDX55/SPB4 subfamily. As to quaternary structure, component of pre-60S ribosomal complexes.

The protein localises to the nucleus. It is found in the nucleolus. The enzyme catalyses ATP + H2O = ADP + phosphate + H(+). In terms of biological role, ATP-binding RNA helicase involved in the biogenesis of 60S ribosomal subunits. Binds 90S pre-ribosomal particles and dissociates from pre-60S ribosomal particles after processing of 27SB pre-rRNA. Required for the normal formation of 18S rRNA through the processing of pre-rRNAs at sites A0, A1 and A2, and the normal formation of 25S and 5.8S rRNAs through the processing of pre-rRNAs at sites C1 and C2. The polypeptide is ATP-dependent rRNA helicase spb4 (Aspergillus oryzae (strain ATCC 42149 / RIB 40) (Yellow koji mold)).